The sequence spans 380 residues: Pectin lyase (380 aa).

Positions 1–20 are cleaved as a signal peptide; it reads MRSASILSAALAAFAPLASA. Residue asparagine 130 is glycosylated (N-linked (GlcNAc...) asparagine).

Belongs to the polysaccharide lyase 1 family.

It is found in the secreted. It carries out the reaction Eliminative cleavage of (1-&gt;4)-alpha-D-galacturonan methyl ester to give oligosaccharides with 4-deoxy-6-O-methyl-alpha-D-galact-4-enuronosyl groups at their non-reducing ends.. This chain is Pectin lyase (PNLA), found in Colletotrichum gloeosporioides (Anthracnose fungus).